A 142-amino-acid chain; its full sequence is Large ribosomal subunit protein uL23 (142 aa).

This sequence belongs to the universal ribosomal protein uL23 family.

The protein is Large ribosomal subunit protein uL23 (RPL25) of Kluyveromyces lactis (strain ATCC 8585 / CBS 2359 / DSM 70799 / NBRC 1267 / NRRL Y-1140 / WM37) (Yeast).